We begin with the raw amino-acid sequence, 65 residues long: UPF0337 protein gbs1203 (65 aa).

A compositionally biased stretch (basic and acidic residues) spans 1-12 (MSEEKFDAKVDK). The segment at 1–29 (MSEEKFDAKVDKVSGSVKESVGKLTGDKE) is disordered.

It belongs to the UPF0337 (CsbD) family.

The protein is UPF0337 protein gbs1203 of Streptococcus agalactiae serotype III (strain NEM316).